The following is a 475-amino-acid chain: Putative poly(A) polymerase catalytic subunit (475 aa).

Belongs to the poxviridae poly(A) polymerase catalytic subunit family. Highly divergent.

It is found in the virion. The catalysed reaction is RNA(n) + ATP = RNA(n)-3'-adenine ribonucleotide + diphosphate. Functionally, polymerase that creates the 3'-poly(A) tail of mRNAs. The chain is Putative poly(A) polymerase catalytic subunit from Ornithodoros (relapsing fever ticks).